A 355-amino-acid polypeptide reads, in one-letter code: LIM/homeobox protein lim-4 (355 aa).

LIM zinc-binding domains lie at 96–155 (VICT…THVT) and 166–228 (PKCA…LVEG). The homeobox DNA-binding region spans 239–298 (TKRVRTTFAEDQLSVLQTYFNRDSNPDGADLEKIASMTGLSKRVTQVWFQNSRARQKKWH). The tract at residues 291-336 (RARQKKWHQKSEGDNGDSQRSSVGPSSPSQKSDSSSEMMYPTSVTT) is disordered. A compositionally biased stretch (low complexity) spans 306-326 (GDSQRSSVGPSSPSQKSDSSS).

Interacts with transcription factor sox-2. Expressed in the AWB sensory neurons and in one RME motor neuron (RMEV), two RMD motor neurons (RMDL and RMDR), the RID, RIV, SAA and SIA interneurons and the SMB sensory/inter/motor neurons.

The protein resides in the nucleus. Its function is as follows. Transcription factor that binds to the promoter of target genes. Regulates genes involved in serotonin synthesis and release in serotonergic ADF neurons. Involved in specification of neuron cell fate, olfactory receptor expression, locomotion, and foraging behavior. Required in AWB olfactory neurons to repress AWC cell fate and promote the AWB cell fate during early development. Cooperates with additional factors to direct the differentiation of the olfactory neurons, functioning with the transcription factor sox-2 to suppress AWC terminal differentiation and promote AWB neuron differentiation. Involved in regulating terminal specification and maintenance of the SMB sensory/inter/motor neurons. Plays a role in regulation of RID motor neuron differentiation, but is dispensable for motor axon outgrowth in the dorsal nerve cord. May regulate its own expression. The polypeptide is LIM/homeobox protein lim-4 (Caenorhabditis elegans).